The chain runs to 375 residues: Actin, cytoplasmic (375 aa).

Belongs to the actin family.

The protein localises to the cytoplasm. It localises to the cytoskeleton. It carries out the reaction ATP + H2O = ADP + phosphate + H(+). Actins are highly conserved proteins that are involved in various types of cell motility and are ubiquitously expressed in all eukaryotic cells. The chain is Actin, cytoplasmic (MIC-ACT-1) from Sterkiella nova (Ciliate).